The sequence spans 302 residues: ATP synthase subunit b 1 (302 aa).

Residues 5 to 22 form a helical membrane-spanning segment; that stretch reads WFTVIAQGINFLLLLWLL. Residues 278-302 are disordered; it reads GLPENEGTDNPEANPPHAEAKIPHA.

It belongs to the ATPase B chain family. F-type ATPases have 2 components, F(1) - the catalytic core - and F(0) - the membrane proton channel. F(1) has five subunits: alpha(3), beta(3), gamma(1), delta(1), epsilon(1). F(0) has three main subunits: a(1), b(2) and c(10-14). The alpha and beta chains form an alternating ring which encloses part of the gamma chain. F(1) is attached to F(0) by a central stalk formed by the gamma and epsilon chains, while a peripheral stalk is formed by the delta and b chains.

The protein localises to the cell inner membrane. F(1)F(0) ATP synthase produces ATP from ADP in the presence of a proton or sodium gradient. F-type ATPases consist of two structural domains, F(1) containing the extramembraneous catalytic core and F(0) containing the membrane proton channel, linked together by a central stalk and a peripheral stalk. During catalysis, ATP synthesis in the catalytic domain of F(1) is coupled via a rotary mechanism of the central stalk subunits to proton translocation. Functionally, component of the F(0) channel, it forms part of the peripheral stalk, linking F(1) to F(0). This Pseudoalteromonas atlantica (strain T6c / ATCC BAA-1087) protein is ATP synthase subunit b 1.